A 101-amino-acid chain; its full sequence is Urease subunit beta (101 aa).

Belongs to the urease beta subunit family. Heterotrimer of UreA (gamma), UreB (beta) and UreC (alpha) subunits. Three heterotrimers associate to form the active enzyme.

Its subcellular location is the cytoplasm. It catalyses the reaction urea + 2 H2O + H(+) = hydrogencarbonate + 2 NH4(+). Its pathway is nitrogen metabolism; urea degradation; CO(2) and NH(3) from urea (urease route): step 1/1. The chain is Urease subunit beta from Cupriavidus pinatubonensis (strain JMP 134 / LMG 1197) (Cupriavidus necator (strain JMP 134)).